We begin with the raw amino-acid sequence, 306 residues long: Proline-rich transmembrane protein 1 (306 aa).

Positions methionine 1–glutamine 142 are disordered. The Cytoplasmic segment spans residues methionine 1–tyrosine 223. Residues threonine 15–alanine 36 are compositionally biased toward pro residues. Residues serine 40–histidine 49 show a composition bias toward basic residues. 2 stretches are compositionally biased toward pro residues: residues histidine 87–proline 111 and proline 121–proline 137. A helical membrane pass occupies residues methionine 224 to phenylalanine 244. Residues lysine 245–serine 275 are Extracellular-facing. An intramembrane region (helical) is located at residues leucine 276–alanine 296. Topologically, residues alanine 297 to proline 306 are extracellular.

Belongs to the CD225/Dispanin family. Component of the outer core of AMPAR complex. AMPAR complex consists of an inner core made of 4 pore-forming GluA/GRIA proteins (GRIA1, GRIA2, GRIA3 and GRIA4) and 4 major auxiliary subunits arranged in a twofold symmetry. One of the two pairs of distinct binding sites is occupied either by CNIH2, CNIH3 or CACNG2, CACNG3. The other harbors CACNG2, CACNG3, CACNG4, CACNG8 or GSG1L. This inner core of AMPAR complex is complemented by outer core constituents binding directly to the GluA/GRIA proteins at sites distinct from the interaction sites of the inner core constituents. Outer core constituents include at least PRRT1, PRRT2, CKAMP44/SHISA9, FRRS1L and NRN1. The proteins of the inner and outer core serve as a platform for other, more peripherally associated AMPAR constituents. Alone or in combination, these auxiliary subunits control the gating and pharmacology of the AMPAR complex and profoundly impact their biogenesis and protein processing.

The protein resides in the cell membrane. It is found in the synapse. In terms of biological role, required to maintain a pool of extrasynaptic AMPA-regulated glutamate receptors (AMPAR) which is necessary for synapse development and function. Regulates basal AMPAR function and synaptic transmission during development but is dispensable at mature hippocampal synapses. Plays a role in regulating basal phosphorylation levels of glutamate receptor GRIA1 and promotes GRIA1 and GRIA2 cell surface expression. In Homo sapiens (Human), this protein is Proline-rich transmembrane protein 1.